The following is a 981-amino-acid chain: Mineralocorticoid receptor (981 aa).

The segment at 1–603 is modulating; that stretch reads METKGYHSLP…STGSSRPSKI (603 aa). Polar residues predominate over residues 234–258; that stretch reads SLTCSPSVENRGSRSHSPTHASNVG. Disordered regions lie at residues 234–331 and 355–376; these read SLTC…ASTV and AIQD…VPFP. Phosphoserine is present on residues Ser250, Ser259, Ser283, Ser287, and Ser299. 2 stretches are compositionally biased toward low complexity: residues 259-300 and 309-327; these read SPLS…VSSP and SVSS…SSPT. Positions 604, 607, 621, 624, 640, 646, 656, and 659 each coordinate Zn(2+). 2 consecutive NR C4-type zinc fingers follow at residues 604 to 624 and 640 to 664; these read CLVC…CGSC and CAGR…LQKC. Residues 604-669 constitute a DNA-binding region (nuclear receptor); the sequence is CLVCGDEASG…RLQKCLQAGM (66 aa). The tract at residues 670–722 is hinge; it reads NLGARKSKKLGKLKGLHEEQPQQPPPPPPQSPEEGTTYIAPTKEPSVNSALVP. Residues 684–710 form a disordered region; that stretch reads GLHEEQPQQPPPPPPQSPEEGTTYIAP. The span at 691-700 shows a compositional bias: pro residues; sequence QQPPPPPPQS. The NR LBD domain maps to 723-961; that stretch reads QLTSITHALT…EFPAMLVEII (239 aa). 21-hydroxyprogesterone contacts are provided by Asn767 and Gln773. Asn767 and Gln773 together coordinate aldosterone. 2 residues coordinate progesterone: Asn767 and Gln773. Positions 779-782 are important for coactivator binding; the sequence is KWAK. 21-hydroxyprogesterone-binding residues include Arg814 and Thr942. Aldosterone contacts are provided by Arg814 and Thr942. Progesterone-binding residues include Arg814 and Thr942.

The protein belongs to the nuclear hormone receptor family. NR3 subfamily. As to quaternary structure, heteromultimeric cytoplasmic complex with HSP90, HSP70, and FKBP4, in the absence of ligand. After ligand binding, it translocates to the nucleus and binds to DNA as a homodimer and as a heterodimer with NR3C1. Binds the coactivator NCOA2. May interact with HSD11B2 in the absence of ligand. Binds the coactivators NCOA1, TIF1 and NRIP1. Post-translationally, phosphorylated. As to expression, detected in liver, brain, heart, kidney, colon, aorta, hippocampus, hypothalamus and adrenal fasciculata.

It is found in the cytoplasm. The protein localises to the nucleus. The protein resides in the endoplasmic reticulum membrane. Receptor for both mineralocorticoids (MC) such as aldosterone and glucocorticoids (GC) such as corticosterone or cortisol. Binds to mineralocorticoid response elements (MRE) and transactivates target genes. The effect of MC is to increase ion and water transport and thus raise extracellular fluid volume and blood pressure and lower potassium levels. The chain is Mineralocorticoid receptor (Nr3c2) from Rattus norvegicus (Rat).